Here is a 66-residue protein sequence, read N- to C-terminus: Toxin BeM14 (66 aa).

One can recognise an LCN-type CS-alpha/beta domain in the interval 2–66 (RDAYIADDRN…IRKIPGEECR (65 aa)). 4 disulfides stabilise this stretch: Cys12/Cys65, Cys16/Cys36, Cys22/Cys46, and Cys26/Cys48.

The protein belongs to the long (4 C-C) scorpion toxin superfamily. Sodium channel inhibitor family. Alpha subfamily. In terms of tissue distribution, expressed by the venom gland.

It is found in the secreted. In terms of biological role, alpha toxins bind voltage-independently at site-3 of sodium channels (Nav) and inhibit the inactivation of the activated channels, thereby blocking neuronal transmission. Has paralytic activity in mice. The protein is Toxin BeM14 of Mesobuthus eupeus (Lesser Asian scorpion).